A 234-amino-acid chain; its full sequence is Carboxy-S-adenosyl-L-methionine synthase (234 aa).

S-adenosyl-L-methionine is bound by residues Y35, 60–62 (GCS), 83–84 (DN), and R191.

This sequence belongs to the class I-like SAM-binding methyltransferase superfamily. Cx-SAM synthase family. In terms of assembly, homodimer.

The enzyme catalyses prephenate + S-adenosyl-L-methionine = carboxy-S-adenosyl-L-methionine + 3-phenylpyruvate + H2O. Its function is as follows. Catalyzes the conversion of S-adenosyl-L-methionine (SAM) to carboxy-S-adenosyl-L-methionine (Cx-SAM). The protein is Carboxy-S-adenosyl-L-methionine synthase of Campylobacter lari (strain RM2100 / D67 / ATCC BAA-1060).